Consider the following 123-residue polypeptide: WAP four-disulfide core domain protein 5 (123 aa).

Positions 1 to 24 are cleaved as a signal peptide; that stretch reads MRIQSLLLLGALLAVGSQPPAAFG. 2 consecutive WAP domains span residues 27-73 and 74-121; these read KGEK…CVPR and VSVK…RDPV. Intrachain disulfides connect cysteine 34–cysteine 62, cysteine 41–cysteine 66, cysteine 49–cysteine 61, cysteine 55–cysteine 70, cysteine 81–cysteine 109, cysteine 88–cysteine 113, cysteine 96–cysteine 108, and cysteine 102–cysteine 117.

The protein localises to the secreted. Functionally, putative acid-stable proteinase inhibitor. The chain is WAP four-disulfide core domain protein 5 (WFDC5) from Aotus nancymaae (Ma's night monkey).